We begin with the raw amino-acid sequence, 495 residues long: UPF0371 protein cgR_2887 (495 aa).

This sequence belongs to the UPF0371 family.

The polypeptide is UPF0371 protein cgR_2887 (Corynebacterium glutamicum (strain R)).